A 132-amino-acid chain; its full sequence is Chemokine-like protein TAFA-5 (132 aa).

Residues 1-43 form the signal peptide; that stretch reads MAPSPRTGSRQDATALPSMSSTFWAFMILASLLIAYCSQLAAG. Asn-113 is a glycosylation site (N-linked (GlcNAc...) asparagine).

The protein belongs to the TAFA family. In terms of tissue distribution, expressed in the subcutaneous and perirenal adipose tissue (at protein level). Highly expressed in adipose tissue with moderate expression in the brain and ovary. Isoform 2: Brain-specific.

The protein resides in the secreted. In terms of biological role, acts as a chemokine-like protein by regulating cell proliferation and migration through activation of G protein-coupled receptors (GPCRs), such as S1PR2 and FPR2. Stimulates chemotactic migration of macrophages mediated by the MAPK3/ERK1 and AKT1 pathway. Blocks TNFSF11/RANKL-induced osteoclast formation from macrophages by inhibiting up-regulation of osteoclast fusogenic and differentiation genes. Stimulation of macrophage migration and inhibition of osteoclast formation is mediated via GPCR FPR2. Acts as an adipokine by negatively regulating vascular smooth muscle cell (VSMC) proliferation and migration in response to platelet-derived growth factor stimulation via GPCR S1PR2 and G protein GNA12/GNA13-transmitted RHOA signaling. Inhibits injury-induced cell proliferation and neointima formation in the femoral arteries. This chain is Chemokine-like protein TAFA-5, found in Homo sapiens (Human).